A 204-amino-acid chain; its full sequence is Transcriptional regulator GfcR (204 aa).

This sequence belongs to the purine/pyrimidine phosphoribosyltransferase family. GfcR subfamily.

In Methanoculleus marisnigri (strain ATCC 35101 / DSM 1498 / JR1), this protein is Transcriptional regulator GfcR.